A 131-amino-acid chain; its full sequence is Protein anoxia up-regulated (131 aa).

A compositionally biased stretch (polar residues) spans M1–V24. The interval M1–G121 is disordered. 2 stretches are compositionally biased toward low complexity: residues S44 to S53 and T98 to G116.

As to expression, concentrated in lamina neurons, first optic lobe neurons and cortical neurons of central brain.

Plays an important role in the regulation of tissue responsiveness to oxygen deprivation. The polypeptide is Protein anoxia up-regulated (Drosophila melanogaster (Fruit fly)).